Here is a 665-residue protein sequence, read N- to C-terminus: Phosphatidylinositol-3-phosphate phosphatase MTMR1 (665 aa).

The residue at position 1 (Met-1) is an N-acetylmethionine. Low complexity predominate over residues 1 to 11 (MDRPAAAAAAG). Residues 1–51 (MDRPAAAAAAGCEGGGGPNPGPAGGRRPPRAAGGATAGSRQPSVETLDSPT) form a disordered region. Gly residues predominate over residues 12-24 (CEGGGGPNPGPAG). A compositionally biased stretch (polar residues) spans 39 to 51 (SRQPSVETLDSPT). Phosphoserine occurs at positions 43 and 49. In terms of domain architecture, GRAM spans 90–161 (NKLAQMEEAP…GVISRVEKIG (72 aa)). In terms of domain architecture, Myotubularin phosphatase spans 226 to 601 (GWKVYDPVSE…SHLELWVNYY (376 aa)). Asn-351, Asn-376, and Ile-377 together coordinate a 1,2-diacyl-sn-glycero-3-phospho-(1D-myo-inositol-3-phosphate). The active-site Phosphocysteine intermediate is the Cys-438. Residues Ser-439, Asp-440, Gly-441, Trp-442, Asp-443, Arg-444, and Arg-484 each coordinate a 1,2-diacyl-sn-glycero-3-phospho-(1D-myo-inositol-3-phosphate). Ser-439 is a binding site for phosphate. Phosphate contacts are provided by Gly-441, Trp-442, Asp-443, and Arg-444. Residues 608–665 (MRPQMPIHQNLKELLAVRAELQKRVEGLQREVATRAVSSSSERGSSPSHSATSVHTSV) are required for dimerization. The disordered stretch occupies residues 642 to 665 (RAVSSSSERGSSPSHSATSVHTSV). The span at 645 to 657 (SSSSERGSSPSHS) shows a compositional bias: low complexity.

It belongs to the protein-tyrosine phosphatase family. Non-receptor class myotubularin subfamily. Homodimer.

It localises to the cell membrane. It is found in the cytoplasm. It catalyses the reaction a 1,2-diacyl-sn-glycero-3-phospho-(1D-myo-inositol-3-phosphate) + H2O = a 1,2-diacyl-sn-glycero-3-phospho-(1D-myo-inositol) + phosphate. It carries out the reaction 1,2-dioctanoyl-sn-glycero-3-phospho-(1-D-myo-inositol-3-phosphate) + H2O = 1,2-dioctanoyl-sn-glycero-3-phospho-(1D-myo-inositol) + phosphate. The catalysed reaction is a 1,2-diacyl-sn-glycero-3-phospho-(1D-myo-inositol-3,5-bisphosphate) + H2O = a 1,2-diacyl-sn-glycero-3-phospho-(1D-myo-inositol-5-phosphate) + phosphate. In terms of biological role, lipid phosphatase that specifically dephosphorylates the D-3 position of phosphatidylinositol 3-phosphate, generating phosphatidylinositol. Could also dephosphorylate phosphatidylinositol 3,5-bisphosphate to produce phosphatidylinositol 5-phosphate. This Homo sapiens (Human) protein is Phosphatidylinositol-3-phosphate phosphatase MTMR1.